The following is a 162-amino-acid chain: Putative 4-hydroxy-4-methyl-2-oxoglutarate aldolase (162 aa).

Substrate is bound by residues 75–78 (GDML) and R97. D98 contributes to the a divalent metal cation binding site.

Belongs to the class II aldolase/RraA-like family. In terms of assembly, homotrimer. A divalent metal cation is required as a cofactor.

The enzyme catalyses 4-hydroxy-4-methyl-2-oxoglutarate = 2 pyruvate. It catalyses the reaction oxaloacetate + H(+) = pyruvate + CO2. Functionally, catalyzes the aldol cleavage of 4-hydroxy-4-methyl-2-oxoglutarate (HMG) into 2 molecules of pyruvate. Also contains a secondary oxaloacetate (OAA) decarboxylase activity due to the common pyruvate enolate transition state formed following C-C bond cleavage in the retro-aldol and decarboxylation reactions. The polypeptide is Putative 4-hydroxy-4-methyl-2-oxoglutarate aldolase (Stutzerimonas stutzeri (strain A1501) (Pseudomonas stutzeri)).